The following is a 293-amino-acid chain: Signal recognition particle receptor FtsY (293 aa).

Residues Gly-93–Thr-100, Asp-175–Arg-179, and Thr-239–Asp-242 each bind GTP.

The protein belongs to the GTP-binding SRP family. FtsY subfamily. Part of the signal recognition particle protein translocation system, which is composed of SRP and FtsY. SRP is a ribonucleoprotein composed of Ffh and a 4.5S RNA molecule.

The protein localises to the cell inner membrane. It is found in the cytoplasm. The enzyme catalyses GTP + H2O = GDP + phosphate + H(+). In terms of biological role, involved in targeting and insertion of nascent membrane proteins into the cytoplasmic membrane. Acts as a receptor for the complex formed by the signal recognition particle (SRP) and the ribosome-nascent chain (RNC). Interaction with SRP-RNC leads to the transfer of the RNC complex to the Sec translocase for insertion into the membrane, the hydrolysis of GTP by both Ffh and FtsY, and the dissociation of the SRP-FtsY complex into the individual components. The protein is Signal recognition particle receptor FtsY of Helicobacter pylori (strain ATCC 700392 / 26695) (Campylobacter pylori).